Here is a 132-residue protein sequence, read N- to C-terminus: Large-conductance mechanosensitive channel (132 aa).

Helical transmembrane passes span 8 to 28, 30 to 50, and 67 to 87; these read FALK…GAFG, IVSS…LGGV, and GAFI…FLFI.

The protein belongs to the MscL family. In terms of assembly, homopentamer.

The protein resides in the cell membrane. Channel that opens in response to stretch forces in the membrane lipid bilayer. May participate in the regulation of osmotic pressure changes within the cell. The chain is Large-conductance mechanosensitive channel from Bacillus cytotoxicus (strain DSM 22905 / CIP 110041 / 391-98 / NVH 391-98).